The primary structure comprises 137 residues: Flavodoxin (137 aa).

The Flavodoxin-like domain maps to 2–137 (VEIVYWSGTG…KELGEAAAKA (136 aa)).

This sequence belongs to the flavodoxin family. Requires FMN as cofactor.

Functionally, low-potential electron donor to a number of redox enzymes. The chain is Flavodoxin from Megasphaera elsdenii.